We begin with the raw amino-acid sequence, 1032 residues long: ATPase MORC2 (1032 aa).

A2 carries the N-acetylalanine modification. Residues N39, 87 to 89, and 99 to 105 each bind ATP; these read SAK and QYGNGLK. N39 lines the Mg(2+) pocket. A coiled-coil region spans residues 282-362; the sequence is SRFKTRAEQE…KEAKQRALKE (81 aa). K427 lines the ATP pocket. Residues 490–544 form a CW-type zinc finger; it reads AMEIPTTIQCDLCLKWRTLPFQLSSVEKDYPDTWVCSMNPDPEQDRCEASEQKQK. Zn(2+) contacts are provided by C499, C502, C525, and C536. Disordered stretches follow at residues 530–563 and 577–793; these read DPEQ…KQKQ and ALQK…RAQK. 2 stretches are compositionally biased toward basic and acidic residues: residues 532–543 and 550–563; these read EQDRCEASEQKQ and FRKD…KQKQ. A coiled-coil region spans residues 547 to 584; sequence LGTFRKDMKTQEEKQKQLTEKIRQQQEKLEALQKTTPI. T582 is subject to Phosphothreonine. S602 and S615 each carry phosphoserine. A compositionally biased stretch (pro residues) spans 627-638; it reads SRPPSLPTPRPA. K652 is covalently cross-linked (Glycyl lysine isopeptide (Lys-Gly) (interchain with G-Cter in SUMO2)). The span at 690–704 shows a compositional bias: low complexity; that stretch reads PLVQQLSPSLLPNSK. S696 is modified (phosphoserine). A Glycyl lysine isopeptide (Lys-Gly) (interchain with G-Cter in SUMO2) cross-link involves residue K704. Residue S705 is modified to Phosphoserine. The segment covering 711 to 720 has biased composition (low complexity); that stretch reads SPKVIKTPVV. Residue K716 forms a Glycyl lysine isopeptide (Lys-Gly) (interchain with G-Cter in SUMO2) linkage. A phosphoserine mark is found at S725 and S730. T733 carries the phosphothreonine modification. Residue S739 is modified to Phosphoserine; by PAK1. A coiled-coil region spans residues 741 to 761; sequence AVSDEEEVEEEAERRKERCKR. Position 743 is a phosphoserine (S743). The span at 765-774 shows a compositional bias: basic and acidic residues; sequence VVKEEKKDSN. K767 participates in a covalent cross-link: Glycyl lysine isopeptide (Lys-Gly) (interchain with G-Cter in SUMO2). 2 positions are modified to phosphoserine: S777 and S779. A Glycyl lysine isopeptide (Lys-Gly) (interchain with G-Cter in SUMO2) cross-link involves residue K819. The disordered stretch occupies residues 850-870; the sequence is RLMKPPSPEHQSLDTQQEGGE. K932 participates in a covalent cross-link: Glycyl lysine isopeptide (Lys-Gly) (interchain with G-Cter in SUMO2). The stretch at 966–1016 forms a coiled coil; the sequence is QSRADSRAKASEESLRTSERKLRETEEKLQKLRTNIVALLQKVQEDIDINT.

As to quaternary structure, homodimerizes upon ATP-binding and dissociate upon ATP hydrolysis; homodimerization is required for gene silencing. Interacts with HDAC4. Interacts with ACLY. Interacts with TASOR and MPHOSPH8; the interactions associate MORC2 with the HUSH complex which recruits MORC2 to heterochromatic loci. In terms of processing, phosphorylated by PAK1 at Ser-739 upon DNA damage. Phosphorylation is required for ATPase activity and recruitment to damaged chromatin. Highly expressed in smooth muscle, pancreas and testis.

Its subcellular location is the nucleus. It is found in the cytoplasm. The protein localises to the cytosol. The protein resides in the chromosome. It localises to the nucleus matrix. The catalysed reaction is ATP + H2O = ADP + phosphate + H(+). ATPase activity is dependent of phosphorylation by PAK1 and presence of DNA. Its function is as follows. Essential for epigenetic silencing by the HUSH (human silencing hub) complex. Recruited by HUSH to target site in heterochromatin, the ATPase activity and homodimerization are critical for HUSH-mediated silencing. Represses germ cell-related genes and L1 retrotransposons in collaboration with SETDB1 and the HUSH complex, the silencing is dependent of repressive epigenetic modifications, such as H3K9me3 mark. Silencing events often occur within introns of transcriptionally active genes, and lead to the down-regulation of host gene expression. During DNA damage response, regulates chromatin remodeling through ATP hydrolysis. Upon DNA damage, is phosphorylated by PAK1, both colocalize to chromatin and induce H2AX expression. ATPase activity is required and dependent of phosphorylation by PAK1 and presence of DNA. Recruits histone deacetylases, such as HDAC4, to promoter regions, causing local histone H3 deacetylation and transcriptional repression of genes such as CA9. Exhibits a cytosolic function in lipogenesis, adipogenic differentiation, and lipid homeostasis by increasing the activity of ACLY, possibly preventing its dephosphorylation. The chain is ATPase MORC2 from Homo sapiens (Human).